The primary structure comprises 113 residues: Large ribosomal subunit protein uL22 (113 aa).

This sequence belongs to the universal ribosomal protein uL22 family. As to quaternary structure, part of the 50S ribosomal subunit.

Functionally, this protein binds specifically to 23S rRNA; its binding is stimulated by other ribosomal proteins, e.g. L4, L17, and L20. It is important during the early stages of 50S assembly. It makes multiple contacts with different domains of the 23S rRNA in the assembled 50S subunit and ribosome. In terms of biological role, the globular domain of the protein is located near the polypeptide exit tunnel on the outside of the subunit, while an extended beta-hairpin is found that lines the wall of the exit tunnel in the center of the 70S ribosome. The sequence is that of Large ribosomal subunit protein uL22 from Desulforamulus reducens (strain ATCC BAA-1160 / DSM 100696 / MI-1) (Desulfotomaculum reducens).